We begin with the raw amino-acid sequence, 347 residues long: Dihydroorotase (347 aa).

H14 and H16 together coordinate Zn(2+). Substrate contacts are provided by residues 16–18 and N42; that span reads HLR. Zn(2+) is bound by residues K100, H137, and H175. K100 is modified (N6-carboxylysine). H137 is a binding site for substrate. A substrate-binding site is contributed by L220. D248 lines the Zn(2+) pocket. Residue D248 is part of the active site. Substrate is bound by residues H252 and A264.

Belongs to the metallo-dependent hydrolases superfamily. DHOase family. Class II DHOase subfamily. In terms of assembly, homodimer. Zn(2+) is required as a cofactor.

The enzyme catalyses (S)-dihydroorotate + H2O = N-carbamoyl-L-aspartate + H(+). It functions in the pathway pyrimidine metabolism; UMP biosynthesis via de novo pathway; (S)-dihydroorotate from bicarbonate: step 3/3. In terms of biological role, catalyzes the reversible cyclization of carbamoyl aspartate to dihydroorotate. The chain is Dihydroorotase from Pseudomonas savastanoi pv. phaseolicola (strain 1448A / Race 6) (Pseudomonas syringae pv. phaseolicola (strain 1448A / Race 6)).